Reading from the N-terminus, the 426-residue chain is Gamma-glutamyl phosphate reductase (426 aa).

It belongs to the gamma-glutamyl phosphate reductase family.

It localises to the cytoplasm. It catalyses the reaction L-glutamate 5-semialdehyde + phosphate + NADP(+) = L-glutamyl 5-phosphate + NADPH + H(+). The protein operates within amino-acid biosynthesis; L-proline biosynthesis; L-glutamate 5-semialdehyde from L-glutamate: step 2/2. Its function is as follows. Catalyzes the NADPH-dependent reduction of L-glutamate 5-phosphate into L-glutamate 5-semialdehyde and phosphate. The product spontaneously undergoes cyclization to form 1-pyrroline-5-carboxylate. This is Gamma-glutamyl phosphate reductase from Deinococcus geothermalis (strain DSM 11300 / CIP 105573 / AG-3a).